The chain runs to 440 residues: Alpha-ionylideneethane synthase aba3 (440 aa).

The protein belongs to the alpha-ionylideneethane synthase family.

Its pathway is hormone biosynthesis. Its function is as follows. Alpha-ionylideneethane synthase; part of the gene cluster that mediates the biosynthesis of abscisic acid (ABA), a phytohormone that acts antagonistically toward salicylic acid (SA), jasmonic acid (JA) and ethylene (ETH) signaling, to impede plant defense responses. The first step of the pathway catalyzes the reaction from farnesyl diphosphate to alpha-ionylideneethane performed by the alpha-ionylideneethane synthase aba3 via a three-step reaction mechanism involving 2 neutral intermediates, beta-farnesene and allofarnesene. The cytochrome P450 monooxygenase aba1 might then be involved in the conversion of alpha-ionylideneethane to alpha-ionylideneacetic acid. Alpha-ionylideneacetic acid is further converted to abscisic acid in 2 steps involving the cytochrome P450 monooxygenase aba2 and the short-chain dehydrogenase/reductase aba4, via the intermediates 1'-deoxy-ABA or 1',4'-trans-diol-ABA, depending on the order of action of these 2 enzymes. Aba2 is responsible for the hydroxylation of carbon atom C-1' and aba4 might be involved in the oxidation of the C-4' carbon atom. The protein is Alpha-ionylideneethane synthase aba3 of Botryotinia fuckeliana (strain B05.10) (Noble rot fungus).